Here is a 764-residue protein sequence, read N- to C-terminus: MEAMMNFTSQYTVEEALAIENEFSRLKEKCYLDHAGTTLYADSQIRSVCEGLAQNLYCNPHTSRTTEDLLDQVRYRVLRHFNTRSSEYSLIFTSGTTASLKLLAESFEFAPEGAFVYLKDSHTSVLGMREIVGTERIYPVEREQLLKELDSSERSDNEHSSLIVFPAQCNFNGVKYPLELVRKIQRDGISGYGKERFRVCLDAASFVSTSFLDLSKYQPDFVCLSFYKIFGYPTGLGALLVHHTAADQLRKKYYGGGTVKIAMAGRIFHVKRDPLVERFEDGTLAFTSIIALLQGFETLERLVPSTAGLRTIERISQQTFHIGRYCYNRLKALRHSNENAVVKLYHDTGFEDRGLQGGIVNFNILHEDGTYVGFAEVSYMASLHNILLRTGCFCNPGACQRHLQLSDEDVLKQFDAGHVCGDANDLIDGQPTGSVRVSFGYMTRKEDIDCLLEMIEKCYIRKTIANGFTRTQIVSKYKSHDQPRLKMICLFPIKSCGAFKVTTRWPLSRRGLKHDREFVIVDENGVALTQKKLAEMCLIRPQINVKTNEMTLSHPGMADFVLQLDLLGESQRIKLCQTKVCQDNVQAIDCGDQVAEWISVALQTSGLRLLKQSDEEVRTFQQSKQEIALANQAQFLLINQASVRWLADKVPDWDELHEEPTLESLVDRFRGNLIVETPKSMEECDWKRVTIGYLEFAVDGPCSRCQMICIDQGTGVKATEPLRTIGREFKGKMRFGIYLSHVNPLRDGSEQWLYCNSVVEGLSE.

N6-(pyridoxal phosphate)lysine is present on Lys228. Cys394 is a catalytic residue. An MOSC domain is found at Leu607 to Leu762.

This sequence belongs to the class-V pyridoxal-phosphate-dependent aminotransferase family. MOCOS subfamily. Pyridoxal 5'-phosphate is required as a cofactor.

The enzyme catalyses Mo-molybdopterin + L-cysteine + AH2 = thio-Mo-molybdopterin + L-alanine + A + H2O. Sulfurates the molybdenum cofactor. Sulfation of molybdenum is essential for xanthine dehydrogenase (XDH) and aldehyde oxidase (ADO) enzymes in which molybdenum cofactor is liganded by 1 oxygen and 1 sulfur atom in active form. This chain is Molybdenum cofactor sulfurase 1, found in Aedes aegypti (Yellowfever mosquito).